A 106-amino-acid polypeptide reads, in one-letter code: COX assembly mitochondrial protein homolog (106 aa).

The residue at position 2 (Ala-2) is an N-acetylalanine. The region spanning 28-71 (KERCSEQVQDFTKCCKNSGVLMVVKCRKENSALKECLTAYYNDP) is the CHCH domain. 2 short sequence motifs (cx9C motif) span residues 31 to 41 (CSEQVQDFTKC) and 53 to 63 (CRKENSALKEC). Disulfide bonds link Cys-31–Cys-63 and Cys-41–Cys-53.

This sequence belongs to the CMC family. Component of the MITRAC (mitochondrial translation regulation assembly intermediate of cytochrome c oxidase complex) complex, the core components of this complex being COA3/MITRAC12 and COX14.

It localises to the mitochondrion. Its function is as follows. Component of the MITRAC (mitochondrial translation regulation assembly intermediate of cytochrome c oxidase complex) complex, that regulates cytochrome c oxidase assembly. This is COX assembly mitochondrial protein homolog (CMC1) from Homo sapiens (Human).